We begin with the raw amino-acid sequence, 206 residues long: Outer-membrane lipoprotein LolB (206 aa).

The signal sequence occupies residues 1 to 21 (MHERNYAVFRLLPLASLLLAA). The N-palmitoyl cysteine moiety is linked to residue C22. C22 carries the S-diacylglycerol cysteine lipid modification.

This sequence belongs to the LolB family. As to quaternary structure, monomer.

It is found in the cell outer membrane. Its function is as follows. Plays a critical role in the incorporation of lipoproteins in the outer membrane after they are released by the LolA protein. This is Outer-membrane lipoprotein LolB from Sodalis glossinidius (strain morsitans).